The chain runs to 802 residues: Aldehyde dehydrogenase family 16 member A1 (802 aa).

This sequence belongs to the aldehyde dehydrogenase family. In terms of assembly, interacts with SPG21.

The sequence is that of Aldehyde dehydrogenase family 16 member A1 (Aldh16a1) from Mus musculus (Mouse).